The chain runs to 374 residues: Histidinol-phosphate aminotransferase 2 (374 aa).

The residue at position 227 (lysine 227) is an N6-(pyridoxal phosphate)lysine.

The protein belongs to the class-II pyridoxal-phosphate-dependent aminotransferase family. Histidinol-phosphate aminotransferase subfamily. In terms of assembly, homodimer. Pyridoxal 5'-phosphate is required as a cofactor.

The catalysed reaction is L-histidinol phosphate + 2-oxoglutarate = 3-(imidazol-4-yl)-2-oxopropyl phosphate + L-glutamate. Its pathway is amino-acid biosynthesis; L-histidine biosynthesis; L-histidine from 5-phospho-alpha-D-ribose 1-diphosphate: step 7/9. This chain is Histidinol-phosphate aminotransferase 2 (hisC2), found in Ralstonia nicotianae (strain ATCC BAA-1114 / GMI1000) (Ralstonia solanacearum).